A 159-amino-acid polypeptide reads, in one-letter code: uncharacterized protein (159 aa).

This is an uncharacterized protein from Aquifex aeolicus (strain VF5).